A 406-amino-acid polypeptide reads, in one-letter code: Renin (406 aa).

A signal peptide spans 1 to 23 (MDGWRRMPRWGLLLLLWGSCTFG). A propeptide spans 24 to 66 (LPTDTTTFKRIFLKRMPSIRESLKERGVDMARLGPEWSQPMKR) (activation peptide). N-linked (GlcNAc...) asparagine glycosylation occurs at asparagine 71. The Peptidase A1 domain maps to 86–403 (YYGEIGIGTP…DRRNNRIGFA (318 aa)). The active site involves aspartate 104. A disulfide bond links cysteine 117 and cysteine 124. Residue asparagine 141 is glycosylated (N-linked (GlcNAc...) asparagine). A disulfide bridge connects residues cysteine 283 and cysteine 287. Residue aspartate 292 is part of the active site. The cysteines at positions 325 and 362 are disulfide-linked.

Belongs to the peptidase A1 family. As to quaternary structure, interacts with ATP6AP2.

It is found in the secreted. The protein localises to the membrane. It carries out the reaction Cleavage of Leu-|-Xaa bond in angiotensinogen to generate angiotensin I.. Its activity is regulated as follows. Interaction with ATP6AP2 results in a 5-fold increased efficiency in angiotensinogen processing. Its function is as follows. Renin is a highly specific endopeptidase, whose only known function is to generate angiotensin I from angiotensinogen in the plasma, initiating a cascade of reactions that produce an elevation of blood pressure and increased sodium retention by the kidney. The protein is Renin (REN) of Macaca mulatta (Rhesus macaque).